The following is a 169-amino-acid chain: 6,7-dimethyl-8-ribityllumazine synthase (169 aa).

5-amino-6-(D-ribitylamino)uracil is bound by residues W27, 61–63 (SYE), and 90–92 (VLI). 95–96 (ST) provides a ligand contact to (2S)-2-hydroxy-3-oxobutyl phosphate. Residue H98 is the Proton donor of the active site. Position 123 (F123) interacts with 5-amino-6-(D-ribitylamino)uracil. Position 137 (R137) interacts with (2S)-2-hydroxy-3-oxobutyl phosphate.

The protein belongs to the DMRL synthase family. Homopentamer.

It is found in the mitochondrion intermembrane space. It catalyses the reaction (2S)-2-hydroxy-3-oxobutyl phosphate + 5-amino-6-(D-ribitylamino)uracil = 6,7-dimethyl-8-(1-D-ribityl)lumazine + phosphate + 2 H2O + H(+). Its pathway is cofactor biosynthesis; riboflavin biosynthesis; riboflavin from 2-hydroxy-3-oxobutyl phosphate and 5-amino-6-(D-ribitylamino)uracil: step 1/2. Catalyzes the formation of 6,7-dimethyl-8-ribityllumazine by condensation of 5-amino-6-(D-ribitylamino)uracil with 3,4-dihydroxy-2-butanone 4-phosphate. This is the penultimate step in the biosynthesis of riboflavin. The protein is 6,7-dimethyl-8-ribityllumazine synthase (RIB4) of Saccharomyces cerevisiae (strain ATCC 204508 / S288c) (Baker's yeast).